The chain runs to 635 residues: DNA-directed RNA polymerase subunit gamma (635 aa).

Residues C74, C76, C89, and C92 each coordinate Zn(2+). The Mg(2+) site is built by D471, D473, and D475.

Belongs to the RNA polymerase beta' chain family. RpoC1 subfamily. As to quaternary structure, in cyanobacteria the RNAP catalytic core is composed of 2 alpha, 1 beta, 1 beta', 1 gamma and 1 omega subunit. When a sigma factor is associated with the core the holoenzyme is formed, which can initiate transcription. Requires Mg(2+) as cofactor. It depends on Zn(2+) as a cofactor.

The enzyme catalyses RNA(n) + a ribonucleoside 5'-triphosphate = RNA(n+1) + diphosphate. Functionally, DNA-dependent RNA polymerase catalyzes the transcription of DNA into RNA using the four ribonucleoside triphosphates as substrates. This chain is DNA-directed RNA polymerase subunit gamma, found in Prochlorococcus marinus (strain NATL2A).